We begin with the raw amino-acid sequence, 147 residues long: Cyanate hydratase (147 aa).

Active-site residues include Arg-88, Glu-91, and Ser-114.

Belongs to the cyanase family.

The enzyme catalyses cyanate + hydrogencarbonate + 3 H(+) = NH4(+) + 2 CO2. Its function is as follows. Catalyzes the reaction of cyanate with bicarbonate to produce ammonia and carbon dioxide. The chain is Cyanate hydratase from Variovorax paradoxus (strain S110).